A 432-amino-acid chain; its full sequence is ATP-dependent RNA helicase RhlB (432 aa).

Positions 9–37 match the Q motif motif; the sequence is QNFADLGLQPQVIDGLNAKGFIKCTPIQA. Residues 40–219 enclose the Helicase ATP-binding domain; the sequence is LPVLLAGQDI…FEHMQEPEHV (180 aa). 53 to 60 lines the ATP pocket; that stretch reads AQTGTGKT. The DEAD box motif lies at 165 to 168; sequence DEAD. Residues 245–390 form the Helicase C-terminal domain; the sequence is ALLQTLIEEE…QSDYDASALL (146 aa). The segment at 397 to 432 is disordered; it reads LRLQRRPQQNRRNNNGQRQGGNRKHSRPRQPRNTQS. Positions 417–426 are enriched in basic residues; sequence GNRKHSRPRQ.

Belongs to the DEAD box helicase family. RhlB subfamily. As to quaternary structure, component of the RNA degradosome, which is a multiprotein complex involved in RNA processing and mRNA degradation.

It is found in the cytoplasm. The enzyme catalyses ATP + H2O = ADP + phosphate + H(+). DEAD-box RNA helicase involved in RNA degradation. Has RNA-dependent ATPase activity and unwinds double-stranded RNA. This is ATP-dependent RNA helicase RhlB from Aliivibrio fischeri (strain MJ11) (Vibrio fischeri).